Here is a 420-residue protein sequence, read N- to C-terminus: Exodeoxyribonuclease 7 large subunit (420 aa).

The protein belongs to the XseA family. Heterooligomer composed of large and small subunits.

The protein resides in the cytoplasm. The enzyme catalyses Exonucleolytic cleavage in either 5'- to 3'- or 3'- to 5'-direction to yield nucleoside 5'-phosphates.. Its function is as follows. Bidirectionally degrades single-stranded DNA into large acid-insoluble oligonucleotides, which are then degraded further into small acid-soluble oligonucleotides. This is Exodeoxyribonuclease 7 large subunit from Helicobacter acinonychis (strain Sheeba).